We begin with the raw amino-acid sequence, 119 residues long: UPF0292 protein TV1259 (119 aa).

The region spanning S11 to I93 is the Toprim domain. Positions 17, 62, and 64 each coordinate Mg(2+).

It belongs to the UPF0292 family. Requires Mg(2+) as cofactor.

The chain is UPF0292 protein TV1259 from Thermoplasma volcanium (strain ATCC 51530 / DSM 4299 / JCM 9571 / NBRC 15438 / GSS1).